Reading from the N-terminus, the 305-residue chain is MKKDFLSITDLSAEEYEDILTLAARLKRQRYAGVPHPLLAGKTLAMIFEKASTRTRMSFDVGMYDLGGYALYLNAKDTQLGRGETVADTARVMSRYVHGAIMRTYKHETITEFAKYASIPVINALSDKEHPCQIMADSLTLKEKFGELDGLKIAWIGDGNNVCNSLIMASVQTGMEIAVGTPKGYEPDPAAVKFAKENGGKVTIYDDPVRAVSDAHAIYTDTWISMGEEDIKETKLKDFVGYQLDTALLNKAADDALVLHCLPAHRGEEITDEVIDSMQSGVWDQAENRLHAQKAILVRLMTQGY.

Carbamoyl phosphate is bound by residues 52-55 (STRT), Gln-79, Arg-103, and 130-133 (HPCQ). Residues Asn-161, Asp-221, and 225-226 (SM) each bind L-ornithine. Carbamoyl phosphate-binding positions include 261–262 (CL) and Arg-289.

The protein belongs to the aspartate/ornithine carbamoyltransferase superfamily. OTCase family.

The protein localises to the cytoplasm. It carries out the reaction carbamoyl phosphate + L-ornithine = L-citrulline + phosphate + H(+). It participates in amino-acid biosynthesis; L-arginine biosynthesis; L-arginine from L-ornithine and carbamoyl phosphate: step 1/3. Its function is as follows. Reversibly catalyzes the transfer of the carbamoyl group from carbamoyl phosphate (CP) to the N(epsilon) atom of ornithine (ORN) to produce L-citrulline. This chain is Ornithine carbamoyltransferase, found in Methanocorpusculum labreanum (strain ATCC 43576 / DSM 4855 / Z).